The chain runs to 99 residues: Nucleoid-associated protein Cj1642 (99 aa).

The protein belongs to the YbaB/EbfC family. In terms of assembly, homodimer.

Its subcellular location is the cytoplasm. The protein localises to the nucleoid. Binds to DNA and alters its conformation. May be involved in regulation of gene expression, nucleoid organization and DNA protection. This chain is Nucleoid-associated protein Cj1642, found in Campylobacter jejuni subsp. jejuni serotype O:2 (strain ATCC 700819 / NCTC 11168).